The primary structure comprises 358 residues: Bi-functional coumaroyl CoA and feruloyl CoA ortho-hydroxylase F6H2-2-1 (358 aa).

The 109-residue stretch at 200–308 folds into the Fe2OG dioxygenase domain; sequence SKESLLMGSR…RISVPVFVNP (109 aa). Tyrosine 216 is a binding site for 2-oxoglutarate. Residues histidine 231, aspartate 233, and histidine 289 each contribute to the Fe cation site. Positions 299 and 301 each coordinate 2-oxoglutarate.

This sequence belongs to the iron/ascorbate-dependent oxidoreductase family. L-ascorbate serves as cofactor. It depends on Fe(2+) as a cofactor. Mostly expressed in underground stems and stems.

It catalyses the reaction (E)-4-coumaroyl-CoA + 2-oxoglutarate + O2 = (E)-2,4-dihydroxycinnamoyl-CoA + succinate + CO2. The catalysed reaction is (E)-feruloyl-CoA + 2-oxoglutarate + O2 = (E)-6-hydroxyferuloyl-CoA + succinate + CO2. Its pathway is phenylpropanoid metabolism. 2-oxoglutarate (OG)- and Fe(II)-dependent dioxygenase (2OGD) involved in scopoletin and umbelliferone biosynthesis. Converts feruloyl CoA into 6'-hydroxyferuloyl CoA, and p-coumaroyl CoA into 2,4-dihydroxycinnamoyl-CoA, but has no activity toward caffeoyl-CoA. This is Bi-functional coumaroyl CoA and feruloyl CoA ortho-hydroxylase F6H2-2-1 from Ipomoea batatas (Sweet potato).